Here is a 394-residue protein sequence, read N- to C-terminus: RAB6A-GEF complex partner protein 2 (394 aa).

It belongs to the RGP1 family. Forms a complex with RIC1; the interaction enhances RAB6A GTPase activity. Interacts with RIC1. Interacts with RAB6A; the interaction is direct with a preference for RAB6A-GDP. Interacts with RAB33B.

It localises to the cytoplasm. It is found in the cytosol. Its subcellular location is the membrane. Its function is as follows. The RIC1-RGP1 complex acts as a guanine nucleotide exchange factor (GEF), which activates RAB6A by exchanging bound GDP for free GTP and may thereby required for efficient fusion of endosome-derived vesicles with the Golgi compartment. The RIC1-RGP1 complex participates in the recycling of mannose-6-phosphate receptors. This is RAB6A-GEF complex partner protein 2 from Bos taurus (Bovine).